The sequence spans 373 residues: Anhydro-N-acetylmuramic acid kinase (373 aa).

Residue 12-19 (GTSLDGVD) coordinates ATP.

Belongs to the anhydro-N-acetylmuramic acid kinase family.

It catalyses the reaction 1,6-anhydro-N-acetyl-beta-muramate + ATP + H2O = N-acetyl-D-muramate 6-phosphate + ADP + H(+). It participates in amino-sugar metabolism; 1,6-anhydro-N-acetylmuramate degradation. Its pathway is cell wall biogenesis; peptidoglycan recycling. Functionally, catalyzes the specific phosphorylation of 1,6-anhydro-N-acetylmuramic acid (anhMurNAc) with the simultaneous cleavage of the 1,6-anhydro ring, generating MurNAc-6-P. Is required for the utilization of anhMurNAc either imported from the medium or derived from its own cell wall murein, and thus plays a role in cell wall recycling. This is Anhydro-N-acetylmuramic acid kinase from Salmonella gallinarum (strain 287/91 / NCTC 13346).